The following is a 184-amino-acid chain: Peptide deformylase (184 aa).

Residues Cys98 and His140 each coordinate Fe cation. The active site involves Glu141. His144 contacts Fe cation.

This sequence belongs to the polypeptide deformylase family. It depends on Fe(2+) as a cofactor.

The enzyme catalyses N-terminal N-formyl-L-methionyl-[peptide] + H2O = N-terminal L-methionyl-[peptide] + formate. Removes the formyl group from the N-terminal Met of newly synthesized proteins. Requires at least a dipeptide for an efficient rate of reaction. N-terminal L-methionine is a prerequisite for activity but the enzyme has broad specificity at other positions. The chain is Peptide deformylase from Phocaeicola vulgatus (strain ATCC 8482 / DSM 1447 / JCM 5826 / CCUG 4940 / NBRC 14291 / NCTC 11154) (Bacteroides vulgatus).